We begin with the raw amino-acid sequence, 306 residues long: Recombination-associated protein RdgC (306 aa).

The protein belongs to the RdgC family.

Its subcellular location is the cytoplasm. The protein resides in the nucleoid. In terms of biological role, may be involved in recombination. The polypeptide is Recombination-associated protein RdgC (Pseudomonas syringae pv. syringae (strain B728a)).